Consider the following 151-residue polypeptide: UPF0208 membrane protein SG1605 (151 aa).

Helical transmembrane passes span 46–64 (FGVR…WQIA) and 70–90 (GPAV…LWWL).

This sequence belongs to the UPF0208 family.

Its subcellular location is the cell inner membrane. This is UPF0208 membrane protein SG1605 from Sodalis glossinidius (strain morsitans).